The chain runs to 644 residues: MGQLLSLTWLLLVMVVTPWFTVAGANDSPEARRCSECHDNATCVLDGVVTTCSCQAGFTGDGLVCEDIDECATPWTHNCSNSICMNTLGSYECSCQDGFRLTPGLGCIDVNECTEQGLSNCHSLATCVNTEGSYSCVCPKGYRGDGWYCECSPGFCEPGLDCLPQGPSGKLVCQDPCNVYETLTEYWRSTDYGAGYSCDSDMHGWYRFTGQGGVRMAETCVPVLRCNTAAPMWLNGSHPSSREGIVSRTACAHWSDHCCLWSTEIQVKACPGGFYVYNLTEPPECNLAYCTDPSSVEGTCEECGVDEDCVSDNGRWRCQCKQDFNVTDVSLLEHRLECEANEIKISLSKCQLQSLGFMKVFMYLNDRQCSGFSERGERDWMSIVTPARDGPCGTVLRRNETHATYSNTLYLASEIIIRDINIRINFECSYPLDMKVSLKTSLQPMVSALNISLGGTGKFTVQMALFQNPTYTQPYQGPSVMLSTEAFLYVGTMLDGGDLSRFVLLMTNCYATPSSNSTDPVKYFIIQDRCPHTEDTTIQVTENGESSQARFSIQMFRFAGNSDLVYLHCEVYLCDTMSEQCKPTCSGTRYRSGNFIDQTRVLNLGPITRQGVQASVSKAASSNLGFLSIWLLLFLSATLTLMVH.

The signal sequence occupies residues 1 to 26; that stretch reads MGQLLSLTWLLLVMVVTPWFTVAGAN. Residues 30 to 66 form the EGF-like 1 domain; the sequence is EARRCSECHDNATCVLDGVVTTCSCQAGFTGDGLVCE. 21 disulfides stabilise this stretch: C34–C43, C37–C52, C54–C65, C71–C84, C79–C93, C95–C107, C113–C127, C121–C136, C138–C149, C151–C162, C156–C173, C177–C270, C198–C285, C220–C258, C226–C290, C251–C259, C300–C309, C303–C318, C320–C350, C338–C428, and C369–C392. N-linked (GlcNAc...) asparagine glycosylation occurs at N40. Positions 67-108 constitute an EGF-like 2; calcium-binding domain; it reads DIDECATPWTHNCSNSICMNTLGSYECSCQDGFRLTPGLGCI. Residue N78 is glycosylated (N-linked (GlcNAc...) asparagine). Residues 109–150 enclose the EGF-like 3; calcium-binding domain; the sequence is DVNECTEQGLSNCHSLATCVNTEGSYSCVCPKGYRGDGWYCE. The beta hairpin stretch occupies residues 151 to 174; it reads CSPGFCEPGLDCLPQGPSGKLVCQ. The D10C stretch occupies residues 175-294; the sequence is DPCNVYETLT…CNLAYCTDPS (120 aa). N235 carries N-linked (GlcNAc...) asparagine glycosylation. N278 is a glycosylation site (N-linked (GlcNAc...) asparagine). The EGF-like 4 domain maps to 295–326; sequence SVEGTCEECGVDEDCVSDNGRWRCQCKQDFNV. An N-linked (GlcNAc...) asparagine glycan is attached at N325. The interval 337-432 is ZP-N; sequence ECEANEIKIS…RINFECSYPL (96 aa). A ZP domain is found at 337-592; the sequence is ECEANEIKIS…PTCSGTRYRS (256 aa). N399 and N450 each carry an N-linked (GlcNAc...) asparagine glycan. The interval 433 to 456 is flexible ZP-N/ZP-C linker; important for secretion and polymerization into filaments; sequence DMKVSLKTSLQPMVSALNISLGGT. The interval 457–467 is internal hydrophobic patch (IHP); that stretch reads GKFTVQMALFQ. A ZP-C region spans residues 457 to 592; that stretch reads GKFTVQMALF…PTCSGTRYRS (136 aa). Disulfide bonds link C509/C569, C530/C585, and C574/C581. The N-linked (GlcNAc...) asparagine glycan is linked to N516. Positions 589-592 are essential for cleavage by HPN; the sequence is RYRS. Residues 601–609 are external hydrophobic patch (EHP); regulates polymerization into filaments; it reads VLNLGPITR. S615 carries the GPI-anchor amidated serine lipid modification. Residues 616-644 constitute a propeptide, removed in mature form; the sequence is VSKAASSNLGFLSIWLLLFLSATLTLMVH.

In terms of assembly, homodimer that then polymerizes into long filaments. The filaments can additionally assemble laterally to form a sheet. The filaments consist of a zigzag-shaped backbone with laterally protruding arms which interact with bacterial adhesin fimH. Two fimH molecules can bind to a single UMOD monomer. In terms of processing, N-glycosylated. Proteolytically cleaved at a conserved C-terminal proteolytic cleavage site to generate the secreted form found in urine. This cleavage is catalyzed by HPN. In terms of tissue distribution, expression restricted to the thick ascending limb of the loop of Henle (TALH).

The protein localises to the apical cell membrane. It is found in the basolateral cell membrane. It localises to the cell projection. The protein resides in the cilium membrane. Its subcellular location is the secreted. In terms of biological role, functions in biogenesis and organization of the apical membrane of epithelial cells of the thick ascending limb of Henle's loop (TALH), where it promotes formation of complex filamentous gel-like structure that may play a role in the water barrier permeability. May serve as a receptor for binding and endocytosis of cytokines (IL-1, IL-2) and TNF. Facilitates neutrophil migration across renal epithelia. In the urine, may contribute to colloid osmotic pressure, retards passage of positively charged electrolytes, and inhibits formation of liquid containing supersaturated salts and subsequent formation of salt crystals. Protects against urinary tract infections by binding to type 1 fimbriated E.coli. Binds to bacterial adhesin fimH which mediates the stable formation of bacterial aggregates, prevents the binding of E.coli to uroplakins UPK1A and UPK1B which act as urothelial receptors for type I fimbriae, and allows for pathogen clearance through micturation. Also promotes aggregation of other bacteria including K.pneumoniae, P.aeruginosa and S.mitis and so may also protect against other uropathogens. The polypeptide is Uromodulin (Umod) (Rattus norvegicus (Rat)).